The following is a 475-amino-acid chain: Ribulose bisphosphate carboxylase large chain (475 aa).

Positions 1 to 2 (MS) are excised as a propeptide. N-acetylproline is present on P3. N6,N6,N6-trimethyllysine is present on K14. The substrate site is built by N123 and T173. K175 (proton acceptor) is an active-site residue. Position 177 (K177) interacts with substrate. Mg(2+)-binding residues include K201, D203, and E204. K201 is modified (N6-carboxylysine). The Proton acceptor role is filled by H294. Positions 327 and 379 each coordinate substrate.

The protein belongs to the RuBisCO large chain family. Type I subfamily. As to quaternary structure, heterohexadecamer of 8 large chains and 8 small chains; disulfide-linked. The disulfide link is formed within the large subunit homodimers. The cofactor is Mg(2+). In terms of processing, the disulfide bond which can form in the large chain dimeric partners within the hexadecamer appears to be associated with oxidative stress and protein turnover.

It localises to the plastid. It is found in the chloroplast. It catalyses the reaction 2 (2R)-3-phosphoglycerate + 2 H(+) = D-ribulose 1,5-bisphosphate + CO2 + H2O. The enzyme catalyses D-ribulose 1,5-bisphosphate + O2 = 2-phosphoglycolate + (2R)-3-phosphoglycerate + 2 H(+). In terms of biological role, ruBisCO catalyzes two reactions: the carboxylation of D-ribulose 1,5-bisphosphate, the primary event in carbon dioxide fixation, as well as the oxidative fragmentation of the pentose substrate in the photorespiration process. Both reactions occur simultaneously and in competition at the same active site. This Amaranthus hypochondriacus (Prince-of-Wales feather) protein is Ribulose bisphosphate carboxylase large chain.